The sequence spans 407 residues: Large ribosomal subunit protein uL3-like (407 aa).

A compositionally biased stretch (basic residues) spans 1–31; the sequence is MSHRKFSAPRHGHLGFLPHKRSHRHRGKVKT. Disordered stretches follow at residues 1-35 and 383-407; these read MSHRKFSAPRHGHLGFLPHKRSHRHRGKVKTWPRD and QEKRAFMGPQKKHLEKEKPETSGDL. Residues 394–407 show a composition bias toward basic and acidic residues; sequence KHLEKEKPETSGDL.

The protein belongs to the universal ribosomal protein uL3 family. As to quaternary structure, component of the large ribosomal subunit in striated muscle cells.

Heart- and skeletal muscle-specific component of the ribosome, which regulates muscle function. Component of the large ribosomal subunit in striated muscle cells: replaces the RPL3 paralog in the ribosome in these cells. The ribosome is a large ribonucleoprotein complex responsible for the synthesis of proteins in the cell. Inhibits myotube growth and muscle function. This is Large ribosomal subunit protein uL3-like (RPL3L) from Bos taurus (Bovine).